Here is a 694-residue protein sequence, read N- to C-terminus: Elongation factor G (694 aa).

In terms of domain architecture, tr-type G spans S9 to K288. GTP-binding positions include A18–T25, D82–H86, and N136–D139.

Belongs to the TRAFAC class translation factor GTPase superfamily. Classic translation factor GTPase family. EF-G/EF-2 subfamily.

Its subcellular location is the cytoplasm. Catalyzes the GTP-dependent ribosomal translocation step during translation elongation. During this step, the ribosome changes from the pre-translocational (PRE) to the post-translocational (POST) state as the newly formed A-site-bound peptidyl-tRNA and P-site-bound deacylated tRNA move to the P and E sites, respectively. Catalyzes the coordinated movement of the two tRNA molecules, the mRNA and conformational changes in the ribosome. The polypeptide is Elongation factor G (Chlamydia abortus (strain DSM 27085 / S26/3) (Chlamydophila abortus)).